The following is a 405-amino-acid chain: NADH-quinone oxidoreductase subunit D (405 aa).

Belongs to the complex I 49 kDa subunit family. NDH-1 is composed of 14 different subunits. Subunits NuoB, C, D, E, F, and G constitute the peripheral sector of the complex.

It localises to the cell inner membrane. The catalysed reaction is a quinone + NADH + 5 H(+)(in) = a quinol + NAD(+) + 4 H(+)(out). NDH-1 shuttles electrons from NADH, via FMN and iron-sulfur (Fe-S) centers, to quinones in the respiratory chain. The immediate electron acceptor for the enzyme in this species is believed to be ubiquinone. Couples the redox reaction to proton translocation (for every two electrons transferred, four hydrogen ions are translocated across the cytoplasmic membrane), and thus conserves the redox energy in a proton gradient. This is NADH-quinone oxidoreductase subunit D from Sphingopyxis alaskensis (strain DSM 13593 / LMG 18877 / RB2256) (Sphingomonas alaskensis).